The following is a 287-amino-acid chain: Ribosomal RNA small subunit methyltransferase I (287 aa).

Belongs to the methyltransferase superfamily. RsmI family.

The protein localises to the cytoplasm. The catalysed reaction is cytidine(1402) in 16S rRNA + S-adenosyl-L-methionine = 2'-O-methylcytidine(1402) in 16S rRNA + S-adenosyl-L-homocysteine + H(+). Catalyzes the 2'-O-methylation of the ribose of cytidine 1402 (C1402) in 16S rRNA. This Helicobacter pylori (strain ATCC 700392 / 26695) (Campylobacter pylori) protein is Ribosomal RNA small subunit methyltransferase I.